Consider the following 436-residue polypeptide: 3-ketoacyl-CoA thiolase (436 aa).

Catalysis depends on cysteine 99, which acts as the Acyl-thioester intermediate. Catalysis depends on proton acceptor residues histidine 392 and cysteine 422.

This sequence belongs to the thiolase-like superfamily. Thiolase family. As to quaternary structure, heterotetramer of two alpha chains (FadJ) and two beta chains (FadI).

Its subcellular location is the cytoplasm. It carries out the reaction an acyl-CoA + acetyl-CoA = a 3-oxoacyl-CoA + CoA. It functions in the pathway lipid metabolism; fatty acid beta-oxidation. Functionally, catalyzes the final step of fatty acid oxidation in which acetyl-CoA is released and the CoA ester of a fatty acid two carbons shorter is formed. In Shewanella baltica (strain OS185), this protein is 3-ketoacyl-CoA thiolase.